Here is a 367-residue protein sequence, read N- to C-terminus: MKSFFILLSILQECYGKDIVARIGGRNVAEKIGGARHRRQVLIRGSDEERRHKWFNNTVHYYFYEENFDFTVKESILRAMELISNHTCIKFSTEPSEKSIRMESDSTTIACYAEIGQVRENQLFSFNSDCYSAGVAVHELIHSLGFIHAHQRSDRDQYLEFKKNLDELNQTYQEQYKIWEYQEILVPYDVGSVMQYPNEEDEEYYPVRKYRTMANTMGSAIVAFYDYLMINKYYECSCANNLSCKNHGYPNPSNCSQCNCPYGFGGADCSQRAEPGATFQATETWQNVTISLDAGYRYLENNQKLPQVDFIYQFLWIMAPANKTTQIRVEKFVEGKCLPGCIRGGVEIKTNEDPRLTSPRLCCEETS.

The first 16 residues, M1–G16, serve as a signal peptide directing secretion. The 197-residue stretch at V41–S237 folds into the Peptidase M12A domain. N-linked (GlcNAc...) asparagine glycans are attached at residues N56 and N85. 4 disulfide bridges follow: C88/C236, C111/C130, C238/C258, and C260/C269. Position 138 (H138) interacts with Zn(2+). E139 is an active-site residue. 2 residues coordinate Zn(2+): H142 and H148. 3 N-linked (GlcNAc...) asparagine glycosylation sites follow: N169, N241, and N254. One can recognise an EGF-like domain in the interval K232 to S270. N287 and N322 each carry an N-linked (GlcNAc...) asparagine glycan.

Zn(2+) serves as cofactor. In terms of tissue distribution, expressed in uterine seam (utse) cell.

The protein localises to the secreted. Functionally, metalloprotease. The protein is Zinc metalloproteinase nas-22 (nas-22) of Caenorhabditis elegans.